A 435-amino-acid chain; its full sequence is uncharacterized protein (435 aa).

12 consecutive transmembrane segments (helical) span residues 26-46, 61-81, 96-116, 119-139, 150-170, 177-197, 242-262, 281-301, 325-345, 347-367, 385-405, and 407-427; these read LLSG…VAAP, IVFS…GSLL, IWSF…LYLF, LIGL…ALWF, LFDS…AFLV, VAFL…WQYY, VWGL…LLTW, FTAV…GWLV, FGFF…IICI, IGLA…AELA, LFGG…TGSF, and LSFL…VFVL.

This sequence belongs to the major facilitator superfamily. Phthalate permease family.

The protein resides in the cell membrane. This is an uncharacterized protein from Bacillus subtilis (strain 168).